A 286-amino-acid polypeptide reads, in one-letter code: Lipoyl synthase (286 aa).

[4Fe-4S] cluster-binding residues include Cys38, Cys43, Cys49, Cys64, Cys68, Cys71, and Ser276. The region spanning 50-265 is the Radical SAM core domain; it reads WEQGVATFMI…ENIALDMGFL (216 aa).

Belongs to the radical SAM superfamily. Lipoyl synthase family. [4Fe-4S] cluster serves as cofactor.

The protein localises to the cytoplasm. It carries out the reaction [[Fe-S] cluster scaffold protein carrying a second [4Fe-4S](2+) cluster] + N(6)-octanoyl-L-lysyl-[protein] + 2 oxidized [2Fe-2S]-[ferredoxin] + 2 S-adenosyl-L-methionine + 4 H(+) = [[Fe-S] cluster scaffold protein] + N(6)-[(R)-dihydrolipoyl]-L-lysyl-[protein] + 4 Fe(3+) + 2 hydrogen sulfide + 2 5'-deoxyadenosine + 2 L-methionine + 2 reduced [2Fe-2S]-[ferredoxin]. It participates in protein modification; protein lipoylation via endogenous pathway; protein N(6)-(lipoyl)lysine from octanoyl-[acyl-carrier-protein]: step 2/2. Catalyzes the radical-mediated insertion of two sulfur atoms into the C-6 and C-8 positions of the octanoyl moiety bound to the lipoyl domains of lipoate-dependent enzymes, thereby converting the octanoylated domains into lipoylated derivatives. This is Lipoyl synthase from Karelsulcia muelleri (strain GWSS) (Sulcia muelleri).